The following is an 87-amino-acid chain: Small ribosomal subunit protein bS20 (87 aa).

The protein belongs to the bacterial ribosomal protein bS20 family.

Its function is as follows. Binds directly to 16S ribosomal RNA. The polypeptide is Small ribosomal subunit protein bS20 (Sphingopyxis alaskensis (strain DSM 13593 / LMG 18877 / RB2256) (Sphingomonas alaskensis)).